A 156-amino-acid chain; its full sequence is Arginine repressor (156 aa).

Belongs to the ArgR family.

The protein localises to the cytoplasm. Its pathway is amino-acid biosynthesis; L-arginine biosynthesis [regulation]. In terms of biological role, regulates arginine biosynthesis genes. The protein is Arginine repressor of Shewanella piezotolerans (strain WP3 / JCM 13877).